A 582-amino-acid polypeptide reads, in one-letter code: Kelch-like protein diablo (582 aa).

A disordered region spans residues 1 to 22 (MGDVLISDRPPSPARLSHTSEK). In terms of domain architecture, BTB spans 41-108 (CDVVINVSGR…CYTSHIVVEE (68 aa)). A BACK domain is found at 143–245 (CLGIRAFADT…SPKFLVGTVG (103 aa)). 6 Kelch repeats span residues 292–338 (VLFA…VLND), 340–386 (LYAV…VLDG), 387–433 (FLYA…VLGG), 435–480 (LYAI…VFNN), 482–527 (IYAV…VVNG), and 528–574 (QLYA…VMRA).

It functions in the pathway protein modification; protein ubiquitination. In terms of biological role, probable substrate-specific adapter of an E3 ubiquitin-protein ligase complex which mediates the ubiquitination and subsequent proteasomal degradation of target proteins. May have a role in synapse differentiation and growth. The chain is Kelch-like protein diablo from Culex quinquefasciatus (Southern house mosquito).